Here is a 349-residue protein sequence, read N- to C-terminus: Transmembrane protein 59-like (349 aa).

The N-terminal stretch at 1-22 is a signal peptide; the sequence is MDSVALMPLLLLLLLQPPPATP. N-linked (GlcNAc...) asparagine glycosylation is present at asparagine 100. Residues 276 to 296 traverse the membrane as a helical segment; sequence ILACCLFLSVLVMLWLSCSTL. Residues 347–349 carry the Microbody targeting signal motif; it reads TKL.

This sequence belongs to the TMEM59 family.

The protein resides in the golgi apparatus membrane. In terms of biological role, modulates the O-glycosylation and complex N-glycosylation steps occurring during the Golgi maturation of APP. Inhibits APP transport to the cell surface and further shedding. The chain is Transmembrane protein 59-like (TMEM59L) from Bos taurus (Bovine).